The sequence spans 222 residues: Phosphoribosylformylglycinamidine synthase subunit PurQ (222 aa).

A Glutamine amidotransferase type-1 domain is found at 2–222 (SVAIVRFPGT…DNLLHIAEMK (221 aa)). The active-site Nucleophile is cysteine 86. Residues histidine 194 and glutamate 196 contribute to the active site.

As to quaternary structure, part of the FGAM synthase complex composed of 1 PurL, 1 PurQ and 2 PurS subunits.

The protein localises to the cytoplasm. It catalyses the reaction N(2)-formyl-N(1)-(5-phospho-beta-D-ribosyl)glycinamide + L-glutamine + ATP + H2O = 2-formamido-N(1)-(5-O-phospho-beta-D-ribosyl)acetamidine + L-glutamate + ADP + phosphate + H(+). The catalysed reaction is L-glutamine + H2O = L-glutamate + NH4(+). It participates in purine metabolism; IMP biosynthesis via de novo pathway; 5-amino-1-(5-phospho-D-ribosyl)imidazole from N(2)-formyl-N(1)-(5-phospho-D-ribosyl)glycinamide: step 1/2. Its function is as follows. Part of the phosphoribosylformylglycinamidine synthase complex involved in the purines biosynthetic pathway. Catalyzes the ATP-dependent conversion of formylglycinamide ribonucleotide (FGAR) and glutamine to yield formylglycinamidine ribonucleotide (FGAM) and glutamate. The FGAM synthase complex is composed of three subunits. PurQ produces an ammonia molecule by converting glutamine to glutamate. PurL transfers the ammonia molecule to FGAR to form FGAM in an ATP-dependent manner. PurS interacts with PurQ and PurL and is thought to assist in the transfer of the ammonia molecule from PurQ to PurL. The protein is Phosphoribosylformylglycinamidine synthase subunit PurQ of Helicobacter hepaticus (strain ATCC 51449 / 3B1).